The sequence spans 172 residues: Shikimate kinase (172 aa).

Residue 12-17 coordinates ATP; sequence GSGKTS. Residue T16 participates in Mg(2+) binding. The substrate site is built by D34, R58, and G81. Residue R122 participates in ATP binding. Substrate is bound at residue R139.

It belongs to the shikimate kinase family. As to quaternary structure, monomer. Mg(2+) serves as cofactor.

Its subcellular location is the cytoplasm. The catalysed reaction is shikimate + ATP = 3-phosphoshikimate + ADP + H(+). Its pathway is metabolic intermediate biosynthesis; chorismate biosynthesis; chorismate from D-erythrose 4-phosphate and phosphoenolpyruvate: step 5/7. Its function is as follows. Catalyzes the specific phosphorylation of the 3-hydroxyl group of shikimic acid using ATP as a cosubstrate. This Dictyoglomus turgidum (strain DSM 6724 / Z-1310) protein is Shikimate kinase.